The primary structure comprises 580 residues: Tetratricopeptide repeat protein 39C (580 aa).

3 TPR repeats span residues Ser312–Gln345, His350–Ser383, and Gly482–Arg515.

This sequence belongs to the TTC39 family.

This Mus musculus (Mouse) protein is Tetratricopeptide repeat protein 39C (Ttc39c).